Consider the following 283-residue polypeptide: Thymidylate synthase (283 aa).

Residue arginine 22 participates in dUMP binding. Cysteine 160 (nucleophile) is an active-site residue. DUMP contacts are provided by residues 180–183, asparagine 191, and 221–223; these read RSCD and HIY. Aspartate 183 contacts (6R)-5,10-methylene-5,6,7,8-tetrahydrofolate. Serine 282 is a (6R)-5,10-methylene-5,6,7,8-tetrahydrofolate binding site.

The protein belongs to the thymidylate synthase family. Bacterial-type ThyA subfamily. As to quaternary structure, homodimer.

It is found in the cytoplasm. The enzyme catalyses dUMP + (6R)-5,10-methylene-5,6,7,8-tetrahydrofolate = 7,8-dihydrofolate + dTMP. The protein operates within pyrimidine metabolism; dTTP biosynthesis. Functionally, catalyzes the reductive methylation of 2'-deoxyuridine-5'-monophosphate (dUMP) to 2'-deoxythymidine-5'-monophosphate (dTMP) while utilizing 5,10-methylenetetrahydrofolate (mTHF) as the methyl donor and reductant in the reaction, yielding dihydrofolate (DHF) as a by-product. This enzymatic reaction provides an intracellular de novo source of dTMP, an essential precursor for DNA biosynthesis. In Shewanella sediminis (strain HAW-EB3), this protein is Thymidylate synthase.